The chain runs to 199 residues: uncharacterized protein (199 aa).

Residues 112–160 form the G-patch domain; that stretch reads PKSLGYRVLSQYGWSPQGDTAGLGLENQGRRAPVRAFRVKNDTIGLGTK.

This is an uncharacterized protein from Schizosaccharomyces pombe (strain 972 / ATCC 24843) (Fission yeast).